The following is a 61-amino-acid chain: Large ribosomal subunit protein bL32 (61 aa).

Belongs to the bacterial ribosomal protein bL32 family.

In Cytophaga hutchinsonii (strain ATCC 33406 / DSM 1761 / CIP 103989 / NBRC 15051 / NCIMB 9469 / D465), this protein is Large ribosomal subunit protein bL32.